Consider the following 268-residue polypeptide: Acyl-CoA-binding domain-containing protein 4 (268 aa).

Positions 12–101 (CQKQFQAAVS…MKLVAQKVID (90 aa)) constitute an ACB domain. An acyl-CoA contacts are provided by residues 23-32 (IQNLPKNGSY), 43-47 (YSYYK), K69, and Y88. The segment at 151–175 (AVSEPPCLPKEPAPPSPESHSPRDL) is disordered. The span at 156 to 167 (PCLPKEPAPPSP) shows a compositional bias: pro residues. Phosphoserine is present on residues S166 and S171.

Its function is as follows. Binds medium- and long-chain acyl-CoA esters and may function as an intracellular carrier of acyl-CoA esters. The sequence is that of Acyl-CoA-binding domain-containing protein 4 (ACBD4) from Homo sapiens (Human).